A 150-amino-acid chain; its full sequence is Large ribosomal subunit protein bL9 (150 aa).

It belongs to the bacterial ribosomal protein bL9 family.

Functionally, binds to the 23S rRNA. The polypeptide is Large ribosomal subunit protein bL9 (Shewanella pealeana (strain ATCC 700345 / ANG-SQ1)).